We begin with the raw amino-acid sequence, 526 residues long: Ubiquitin carboxyl-terminal hydrolase 17-like protein A (526 aa).

The tract at residues Met1–Glu21 is disordered. The USP domain occupies Cys51 to Gln348. Catalysis depends on Cys60, which acts as the Nucleophile. Catalysis depends on His307, which acts as the Proton acceptor. The span at Lys374 to Ser385 shows a compositional bias: basic residues. Disordered regions lie at residues Lys374–Pro394 and Arg465–Pro494. Residues Asp473–Asp486 show a composition bias toward basic and acidic residues.

Belongs to the peptidase C19 family. Polyubiquitinated; ubiquitination leads to its subsequent degradation. Expressed in hematopoietic progenitor cell lines Ba/F3 and FDCP1. Not detected in brain, lung, liver, kidney, thymus, spleen and bone marrow.

The catalysed reaction is Thiol-dependent hydrolysis of ester, thioester, amide, peptide and isopeptide bonds formed by the C-terminal Gly of ubiquitin (a 76-residue protein attached to proteins as an intracellular targeting signal).. Deubiquitinating enzyme that removes conjugated ubiquitin from specific proteins to regulate different cellular processes. Has deubiquitinating enzyme activity for DNAH5, suggesting a role in the regulation of DNAH5 degradation by the ubiquitin-proteasome pathway. Has growth-suppressing activity; induces arrest in G1 phase upon controlled expression. This Mus musculus (Mouse) protein is Ubiquitin carboxyl-terminal hydrolase 17-like protein A (Usp17la).